The sequence spans 352 residues: Photosystem II D2 protein (352 aa).

Position 2 is an N-acetylthreonine (Thr2). Thr2 bears the Phosphothreonine mark. The helical transmembrane segment at 40–60 (CAYFALGGWLTGTTFVTSWYT) threads the bilayer. His117 is a chlorophyll a binding site. Residues 124-140 (GFMLRQFEIARSVNLRP) form a helical membrane-spanning segment. Gln129 and Asn142 together coordinate pheophytin a. A helical membrane pass occupies residues 152 to 165 (VFVSVFLIYPLGQS). His197 lines the chlorophyll a pocket. Residues 207 to 227 (AALLCAIHGATVENTLFEDGD) traverse the membrane as a helical segment. A plastoquinone-binding residues include His214 and Phe261. His214 contacts Fe cation. His268 contacts Fe cation. The helical transmembrane segment at 278–294 (GLWMSAIGVVGLALNLR) threads the bilayer.

This sequence belongs to the reaction center PufL/M/PsbA/D family. In terms of assembly, PSII is composed of 1 copy each of membrane proteins PsbA, PsbB, PsbC, PsbD, PsbE, PsbF, PsbH, PsbI, PsbJ, PsbK, PsbL, PsbM, PsbT, PsbX, PsbY, PsbZ, Psb30/Ycf12, at least 3 peripheral proteins of the oxygen-evolving complex and a large number of cofactors. It forms dimeric complexes. The D1/D2 heterodimer binds P680, chlorophylls that are the primary electron donor of PSII, and subsequent electron acceptors. It shares a non-heme iron and each subunit binds pheophytin, quinone, additional chlorophylls, carotenoids and lipids. There is also a Cl(-1) ion associated with D1 and D2, which is required for oxygen evolution. The PSII complex binds additional chlorophylls, carotenoids and specific lipids. is required as a cofactor. Post-translationally, phosphorylated in vitro.

The protein resides in the plastid. It localises to the chloroplast thylakoid membrane. The enzyme catalyses 2 a plastoquinone + 4 hnu + 2 H2O = 2 a plastoquinol + O2. Photosystem II (PSII) is a light-driven water:plastoquinone oxidoreductase that uses light energy to abstract electrons from H(2)O, generating O(2) and a proton gradient subsequently used for ATP formation. It consists of a core antenna complex that captures photons, and an electron transfer chain that converts photonic excitation into a charge separation. The D1/D2 (PsbA/PsbD) reaction center heterodimer binds P680, the primary electron donor of PSII as well as several subsequent electron acceptors. D2 is needed for assembly of a stable PSII complex. The sequence is that of Photosystem II D2 protein from Chlamydomonas reinhardtii (Chlamydomonas smithii).